The primary structure comprises 495 residues: Thiosulfate sulfurtransferase/rhodanese-like domain-containing protein 2 (495 aa).

The residue at position 268 (S268) is a Phosphoserine. Positions 300–395 (EQGNTIILDC…YLEEFPDGFY (96 aa)) constitute a Rhodanese domain. C354 (cysteine persulfide intermediate) is an active-site residue.

The protein is Thiosulfate sulfurtransferase/rhodanese-like domain-containing protein 2 (Tstd2) of Mus musculus (Mouse).